The primary structure comprises 334 residues: Large ribosomal subunit protein uL3 (334 aa).

A compositionally biased stretch (basic residues) spans 1-10 (MGMKKSRPRR). A disordered region spans residues 1-20 (MGMKKSRPRRGSLAFSPRKR).

This sequence belongs to the universal ribosomal protein uL3 family. As to quaternary structure, part of the 50S ribosomal subunit. Forms a cluster with proteins L14 and L24e.

Functionally, one of the primary rRNA binding proteins, it binds directly near the 3'-end of the 23S rRNA, where it nucleates assembly of the 50S subunit. The polypeptide is Large ribosomal subunit protein uL3 (Methanococcus maripaludis (strain C6 / ATCC BAA-1332)).